The chain runs to 498 residues: Isoflavone 2'-hydroxylase (498 aa).

The helical transmembrane segment at Ile-3–Leu-23 threads the bilayer. Cys-436 provides a ligand contact to heme.

The protein belongs to the cytochrome P450 family. Heme is required as a cofactor. In terms of tissue distribution, expressed constitutively in roots, but present at very low levels in uninfected stems and leaves.

The protein resides in the endoplasmic reticulum membrane. It carries out the reaction formononetin + reduced [NADPH--hemoprotein reductase] + O2 = 2'-hydroxyformononetin + oxidized [NADPH--hemoprotein reductase] + H2O + H(+). Involved in the biosynthesis of the pterocarpin phytoalexins. Acts on isoflavones with a 4'-methoxy group on the B-ring, such as formononetin and biochanin A, and on pseudobaptigenin. Has a low activity with daidzein and genistein and no activity with the 7-O-methylated isoflavonoids isoformononetin and prunetin. The protein is Isoflavone 2'-hydroxylase of Medicago truncatula (Barrel medic).